The chain runs to 288 residues: 2-hydroxy-6-oxononadienedioate/2-hydroxy-6-oxononatrienedioate hydrolase (288 aa).

Catalysis depends on His267, which acts as the Proton acceptor.

The protein belongs to the AB hydrolase superfamily. MhpC family. In terms of assembly, homodimer.

The catalysed reaction is (2Z,4E)-2-hydroxy-6-oxonona-2,4-dienedioate + H2O = (2Z)-2-hydroxypenta-2,4-dienoate + succinate + H(+). It catalyses the reaction (2Z,4E,7E)-2-hydroxy-6-oxonona-2,4,7-trienedioate + H2O = (2Z)-2-hydroxypenta-2,4-dienoate + fumarate + H(+). The protein operates within aromatic compound metabolism; 3-phenylpropanoate degradation. In terms of biological role, catalyzes the cleavage of the C5-C6 bond of 2-hydroxy-6-oxononadienedioate and 2-hydroxy-6-oxononatrienedioate, a dienol ring fission product of the bacterial meta-cleavage pathway for degradation of phenylpropionic acid. The protein is 2-hydroxy-6-oxononadienedioate/2-hydroxy-6-oxononatrienedioate hydrolase of Escherichia coli (strain K12 / DH10B).